Reading from the N-terminus, the 248-residue chain is MVANSKESETLTGASAVTGLPQKRFYRQRAHSNPIADHSFNYPARPEDVDWRSLYPSMGDDQQVQFADIGCGYGGFLVTLGEMFPEKLAIGMEIRVKVSDYVIDRIAALRLKNANEATTYQNIACIRTNAMKYLPNYFQKSQLEKMFFLYPDPHFKRAKHKWRIINQALLSEYAYVLRKGGLVYTMTDVEDLHTWIVSHMTQHPLFERLSDEEANADPITPKLYQSSEEGAKVVRNKGEHFLAIFRRI.

S-adenosyl-L-methionine is bound by residues G70, 93–94, 129–130, and L149; these read EI and NA. D152 is a catalytic residue. Position 227–229 (227–229) interacts with S-adenosyl-L-methionine; sequence SEE.

Belongs to the class I-like SAM-binding methyltransferase superfamily. TrmB family.

It localises to the nucleus. The catalysed reaction is guanosine(46) in tRNA + S-adenosyl-L-methionine = N(7)-methylguanosine(46) in tRNA + S-adenosyl-L-homocysteine. It functions in the pathway tRNA modification; N(7)-methylguanine-tRNA biosynthesis. Functionally, catalyzes the formation of N(7)-methylguanine at position 46 (m7G46) in tRNA. In Drosophila mojavensis (Fruit fly), this protein is tRNA (guanine-N(7)-)-methyltransferase.